A 508-amino-acid polypeptide reads, in one-letter code: Catalase (508 aa).

The first 21 residues, 1–21 (MHMSKSFLLISMGLASISVHA), serve as a signal peptide directing secretion. Active-site residues include His-72 and Asn-145. Heme is bound at residue Tyr-353. The span at 373–392 (PKSPVANHNQDGPSNNSTGL) shows a compositional bias: polar residues. The segment at 373–396 (PKSPVANHNQDGPSNNSTGLGNVD) is disordered.

This sequence belongs to the catalase family. It depends on heme as a cofactor.

It localises to the periplasm. The catalysed reaction is 2 H2O2 = O2 + 2 H2O. Decomposes hydrogen peroxide into water and oxygen; serves to protect cells from the toxic effects of hydrogen peroxide. The sequence is that of Catalase from Vibrio vulnificus (strain CMCP6).